The sequence spans 491 residues: Peptidoglycan D,D-transpeptidase PbpA (491 aa).

Residues 1 to 8 (MNTSLRRV) lie on the Cytoplasmic side of the membrane. The helical; Signal-anchor for type II membrane protein transmembrane segment at 9–29 (AVAIMVLIVLLLANATVTQVF) threads the bilayer. Topologically, residues 30–491 (AADGLRADPR…TIAAALREGS (462 aa)) are periplasmic. Positions 160–484 (GSVVALEPST…AAPIGRATIA (325 aa)) are transpeptidase. Catalysis depends on Ser222, which acts as the Acyl-ester intermediate.

The protein belongs to the transpeptidase family.

Its subcellular location is the cell inner membrane. It carries out the reaction Preferential cleavage: (Ac)2-L-Lys-D-Ala-|-D-Ala. Also transpeptidation of peptidyl-alanyl moieties that are N-acyl substituents of D-alanine.. The protein operates within cell wall biogenesis; peptidoglycan biosynthesis. In terms of biological role, transpeptidase that catalyzes cross-linking of the peptidoglycan cell wall. Required for the regulation of cell length. The polypeptide is Peptidoglycan D,D-transpeptidase PbpA (pbpA) (Mycolicibacterium smegmatis (strain ATCC 700084 / mc(2)155) (Mycobacterium smegmatis)).